The sequence spans 86 residues: Protein Tat (86 aa).

The segment at 1–24 (MDPVDPNQEPWNHPGSQPRTACNN) is interaction with human CREBBP. The interval 1–48 (MDPVDPNQEPWNHPGSQPRTACNNCYCKKCCYHCQLCFLKKGLGIYYG) is transactivation. Residues cysteine 22, cysteine 25, and cysteine 27 each coordinate Zn(2+). The cysteine-rich stretch occupies residues 22 to 37 (CNNCYCKKCCYHCQLC). At lysine 28 the chain carries N6-acetyllysine; by host PCAF. Residues cysteine 30, histidine 33, cysteine 34, and cysteine 37 each contribute to the Zn(2+) site. Positions 38 to 48 (FLKKGLGIYYG) are core. Positions 48-58 (GRKKRRQRRGT) are enriched in basic residues. The tract at residues 48-86 (GRKKRRQRRGTPKSLQDHQTLIPKQPLSRTSGDPTGPEK) is disordered. Positions 49-57 (RKKRRQRRG) match the Nuclear localization signal, RNA-binding (TAR), and protein transduction motif. The tract at residues 49 to 86 (RKKRRQRRGTPKSLQDHQTLIPKQPLSRTSGDPTGPEK) is interaction with the host capping enzyme RNGTT. An N6-acetyllysine; by host EP300 and GCN5L2 mark is found at lysine 50 and lysine 51. An asymmetric dimethylarginine; by host PRMT6 mark is found at arginine 52 and arginine 53. Lysine 71 is covalently cross-linked (Glycyl lysine isopeptide (Lys-Gly) (interchain with G-Cter in ubiquitin)).

It belongs to the lentiviruses Tat family. In terms of assembly, interacts with host CCNT1. Associates with the P-TEFb complex composed at least of Tat, P-TEFb (CDK9 and CCNT1), TAR RNA, RNA Pol II. Recruits the HATs CREBBP, TAF1/TFIID, EP300, PCAF and GCN5L2. Interacts with host KAT5/Tip60; this interaction targets the latter to degradation. Interacts with the host deacetylase SIRT1. Interacts with host capping enzyme RNGTT; this interaction stimulates RNGTT. Binds to host KDR, and to the host integrins ITGAV/ITGB3 and ITGA5/ITGB1. Interacts with host KPNB1/importin beta-1 without previous binding to KPNA1/importin alpha-1. Interacts with EIF2AK2. Interacts with host nucleosome assembly protein NAP1L1; this interaction may be required for the transport of Tat within the nucleus, since the two proteins interact at the nuclear rim. Interacts with host C1QBP/SF2P32; this interaction involves lysine-acetylated Tat. Interacts with the host chemokine receptors CCR2, CCR3 and CXCR4. Interacts with host DPP4/CD26; this interaction may trigger an anti-proliferative effect. Interacts with host LDLR. Interacts with the host extracellular matrix metalloproteinase MMP1. Interacts with host PRMT6; this interaction mediates Tat's methylation. Interacts with, and is ubiquitinated by MDM2/Hdm2. Interacts with host PSMC3 and HTATIP2. Interacts with STAB1; this interaction may overcome SATB1-mediated repression of IL2 and IL2RA (interleukin) in T cells by binding to the same domain than HDAC1. Interacts (when acetylated) with human CDK13, thereby increasing HIV-1 mRNA splicing and promoting the production of the doubly spliced HIV-1 protein Nef. Interacts with host TBP; this interaction modulates the activity of transcriptional pre-initiation complex. Interacts with host RELA. Interacts with host PLSCR1; this interaction negatively regulates Tat transactivation activity by altering its subcellular distribution. In terms of processing, asymmetrical arginine methylation by host PRMT6 seems to diminish the transactivation capacity of Tat and affects the interaction with host CCNT1. Post-translationally, acetylation by EP300, CREBBP, GCN5L2/GCN5 and PCAF regulates the transactivation activity of Tat. EP300-mediated acetylation of Lys-50 promotes dissociation of Tat from the TAR RNA through the competitive binding to PCAF's bromodomain. In addition, the non-acetylated Tat's N-terminus can also interact with PCAF. PCAF-mediated acetylation of Lys-28 enhances Tat's binding to CCNT1. Lys-50 is deacetylated by SIRT1. Polyubiquitination by host MDM2 does not target Tat to degradation, but activates its transactivation function and fosters interaction with CCNT1 and TAR RNA. In terms of processing, phosphorylated by EIF2AK2 on serine and threonine residues adjacent to the basic region important for TAR RNA binding and function. Phosphorylation of Tat by EIF2AK2 is dependent on the prior activation of EIF2AK2 by dsRNA.

The protein resides in the host nucleus. The protein localises to the host nucleolus. Its subcellular location is the host cytoplasm. It is found in the secreted. Transcriptional activator that increases RNA Pol II processivity, thereby increasing the level of full-length viral transcripts. Recognizes a hairpin structure at the 5'-LTR of the nascent viral mRNAs referred to as the transactivation responsive RNA element (TAR) and recruits the cyclin T1-CDK9 complex (P-TEFb complex) that will in turn hyperphosphorylate the RNA polymerase II to allow efficient elongation. The CDK9 component of P-TEFb and other Tat-activated kinases hyperphosphorylate the C-terminus of RNA Pol II that becomes stabilized and much more processive. Other factors such as HTATSF1/Tat-SF1, SUPT5H/SPT5, and HTATIP2 are also important for Tat's function. Besides its effect on RNA Pol II processivity, Tat induces chromatin remodeling of proviral genes by recruiting the histone acetyltransferases (HATs) CREBBP, EP300 and PCAF to the chromatin. This also contributes to the increase in proviral transcription rate, especially when the provirus integrates in transcriptionally silent region of the host genome. To ensure maximal activation of the LTR, Tat mediates nuclear translocation of NF-kappa-B by interacting with host RELA. Through its interaction with host TBP, Tat may also modulate transcription initiation. Tat can reactivate a latently infected cell by penetrating in it and transactivating its LTR promoter. In the cytoplasm, Tat is thought to act as a translational activator of HIV-1 mRNAs. In terms of biological role, extracellular circulating Tat can be endocytosed by surrounding uninfected cells via the binding to several surface receptors such as CD26, CXCR4, heparan sulfate proteoglycans (HSPG) or LDLR. Neurons are rarely infected, but they internalize Tat via their LDLR. Through its interaction with nuclear HATs, Tat is potentially able to control the acetylation-dependent cellular gene expression. Modulates the expression of many cellular genes involved in cell survival, proliferation or in coding for cytokines or cytokine receptors. Tat plays a role in T-cell and neurons apoptosis. Tat induced neurotoxicity and apoptosis probably contribute to neuroAIDS. Circulating Tat also acts as a chemokine-like and/or growth factor-like molecule that binds to specific receptors on the surface of the cells, affecting many cellular pathways. In the vascular system, Tat binds to ITGAV/ITGB3 and ITGA5/ITGB1 integrins dimers at the surface of endothelial cells and competes with bFGF for heparin-binding sites, leading to an excess of soluble bFGF. This is Protein Tat from Human immunodeficiency virus type 1 group M subtype H (isolate VI991) (HIV-1).